The primary structure comprises 254 residues: 5'/3'-nucleotidase SurE (254 aa).

4 residues coordinate a divalent metal cation: Asp9, Asp10, Ser40, and Asn93.

This sequence belongs to the SurE nucleotidase family. A divalent metal cation is required as a cofactor.

The protein resides in the cytoplasm. It carries out the reaction a ribonucleoside 5'-phosphate + H2O = a ribonucleoside + phosphate. It catalyses the reaction a ribonucleoside 3'-phosphate + H2O = a ribonucleoside + phosphate. The catalysed reaction is [phosphate](n) + H2O = [phosphate](n-1) + phosphate + H(+). In terms of biological role, nucleotidase with a broad substrate specificity as it can dephosphorylate various ribo- and deoxyribonucleoside 5'-monophosphates and ribonucleoside 3'-monophosphates with highest affinity to 3'-AMP. Also hydrolyzes polyphosphate (exopolyphosphatase activity) with the preference for short-chain-length substrates (P20-25). Might be involved in the regulation of dNTP and NTP pools, and in the turnover of 3'-mononucleotides produced by numerous intracellular RNases (T1, T2, and F) during the degradation of various RNAs. The chain is 5'/3'-nucleotidase SurE from Yersinia pseudotuberculosis serotype O:1b (strain IP 31758).